The primary structure comprises 330 residues: Pseudouridine-5'-phosphate glycosidase (330 aa).

The active-site Proton donor is the Glu-50. Substrate is bound by residues Lys-112 and Val-132. Residue Asp-164 coordinates Mn(2+). Substrate is bound at residue 166–168 (SSD). The active-site Nucleophile is the Lys-185.

Belongs to the pseudouridine-5'-phosphate glycosidase family. As to quaternary structure, homotrimer. Mn(2+) serves as cofactor.

Its subcellular location is the peroxisome. The enzyme catalyses D-ribose 5-phosphate + uracil = psi-UMP + H2O. Functionally, catalyzes the reversible cleavage of pseudouridine 5'-phosphate (PsiMP) to ribose 5-phosphate and uracil. Functions biologically in the cleavage direction, as part of a pseudouridine degradation pathway. Acts together with the pseudouridine kinase PUKI in the peroxisome to prevent toxic pseudouridine monophosphate accumulation. Can catalyze the formation of pseudouridine 5'-phosphate (reverse reaction) in vitro, with a catalytic efficiency 4 times lower than the hydrolysis reaction. The polypeptide is Pseudouridine-5'-phosphate glycosidase (Arabidopsis thaliana (Mouse-ear cress)).